Consider the following 391-residue polypeptide: Curcumin synthase 2 (391 aa).

The active site involves Cys-166.

The protein belongs to the thiolase-like superfamily. Chalcone/stilbene synthases family. In terms of assembly, homodimer.

It catalyses the reaction (E)-feruloylacetyl-CoA + (E)-feruloyl-CoA + H2O = curcumin + CO2 + 2 CoA. The protein operates within secondary metabolite biosynthesis; flavonoid biosynthesis. In terms of biological role, catalyzes the synthesis of curcumin by condensing feruloyl-CoA with a diketide-CoA in the curcuminoid biosynthesis. In Curcuma longa (Turmeric), this protein is Curcumin synthase 2 (CURS2).